The chain runs to 342 residues: Polycomb group RING finger protein 2 (342 aa).

The RING-type zinc finger occupies Cys-18–Asp-57. Residues Lys-51 and Lys-88 each participate in a glycyl lysine isopeptide (Lys-Gly) (interchain with G-Cter in SUMO2) cross-link. The Nuclear localization signal motif lies at Lys-81–Arg-95. A Phosphothreonine; by PKA modification is found at Thr-237. Positions Thr-237–Pro-342 are disordered. Residues Thr-243–Ala-253 are compositionally biased toward polar residues. A compositionally biased stretch (low complexity) spans Ala-263–Ser-318. The segment covering Asn-319–Ser-328 has biased composition (polar residues). Thr-334 carries the phosphothreonine; by PKA modification.

Exists as both a monomer and homodimer. Component of a PRC1-like complex. Interacts with CBX8, RING1 and RNF2. Interacts with CBX7. Interacts with PHC2. In terms of processing, phosphorylated. Homodimer formation is regulated by phosphorylation with only unphosphorylated proteins forming homodimers. As to expression, expressed in embryonic stem cells. Expressed in a variety of tumor cells and in neural tissues.

The protein localises to the nucleus. In terms of biological role, transcriptional repressor. Binds specifically to the DNA sequence 5'-GACTNGACT-3'. Has tumor suppressor activity. May play a role in control of cell proliferation and/or neural cell development. Regulates proliferation of early T progenitor cells by maintaining expression of HES1. Also plays a role in antero-posterior specification of the axial skeleton and negative regulation of the self-renewal activity of hematopoietic stem cells. Component of a Polycomb group (PcG) multiprotein PRC1-like complex, a complex class required to maintain the transcriptionally repressive state of many genes, including Hox genes, throughout development. PcG PRC1 complex acts via chromatin remodeling and modification of histones; it mediates monoubiquitination of histone H2A 'Lys-119', rendering chromatin heritably changed in its expressibility. Within the PRC1-like complex, regulates RNF2 ubiquitin ligase activity. This Mus musculus (Mouse) protein is Polycomb group RING finger protein 2 (Pcgf2).